A 209-amino-acid chain; its full sequence is Pyridoxine/pyridoxamine 5'-phosphate oxidase (209 aa).

Residues 7-10 (REDY) and Lys-64 each bind substrate. FMN-binding positions include 59–64 (RIVLLK), 74–75 (FT), Arg-80, and Lys-81. Residues Tyr-121, Arg-125, and Ser-129 each coordinate substrate. FMN is bound by residues 138–139 (QS) and Trp-182. 188-190 (RLH) contributes to the substrate binding site. Arg-192 serves as a coordination point for FMN.

Belongs to the pyridoxamine 5'-phosphate oxidase family. Homodimer. Requires FMN as cofactor.

It catalyses the reaction pyridoxamine 5'-phosphate + O2 + H2O = pyridoxal 5'-phosphate + H2O2 + NH4(+). The catalysed reaction is pyridoxine 5'-phosphate + O2 = pyridoxal 5'-phosphate + H2O2. Its pathway is cofactor metabolism; pyridoxal 5'-phosphate salvage; pyridoxal 5'-phosphate from pyridoxamine 5'-phosphate: step 1/1. It functions in the pathway cofactor metabolism; pyridoxal 5'-phosphate salvage; pyridoxal 5'-phosphate from pyridoxine 5'-phosphate: step 1/1. Functionally, catalyzes the oxidation of either pyridoxine 5'-phosphate (PNP) or pyridoxamine 5'-phosphate (PMP) into pyridoxal 5'-phosphate (PLP). In Actinobacillus pleuropneumoniae serotype 5b (strain L20), this protein is Pyridoxine/pyridoxamine 5'-phosphate oxidase.